The primary structure comprises 378 residues: 23S rRNA (uracil(747)-C(5))-methyltransferase RlmC (378 aa).

[4Fe-4S] cluster contacts are provided by Cys-3, Cys-11, Cys-14, and Cys-87. S-adenosyl-L-methionine-binding residues include Gln-212, Phe-241, Glu-262, and Asn-309. The active-site Nucleophile is Cys-336.

It belongs to the class I-like SAM-binding methyltransferase superfamily. RNA M5U methyltransferase family. RlmC subfamily.

It catalyses the reaction uridine(747) in 23S rRNA + S-adenosyl-L-methionine = 5-methyluridine(747) in 23S rRNA + S-adenosyl-L-homocysteine + H(+). In terms of biological role, catalyzes the formation of 5-methyl-uridine at position 747 (m5U747) in 23S rRNA. The sequence is that of 23S rRNA (uracil(747)-C(5))-methyltransferase RlmC from Shewanella halifaxensis (strain HAW-EB4).